The primary structure comprises 358 residues: Protein phosphatase 1 regulatory subunit 3G (358 aa).

Residues 1 to 71 form a disordered region; that stretch reads MEPIGARLSL…KEEAAPQEQE (71 aa). Low complexity predominate over residues 11 to 29; it reads EAPGPAPFREAPPAEELPA. Phosphoserine is present on Ser86. One can recognise a CBM21 domain in the interval 210-350; that stretch reads AERLQRQRVC…NNAGANYTLR (141 aa). The segment covering 270–280 has biased composition (low complexity); it reads EPLEPQQPEAP. Positions 270-295 are disordered; that stretch reads EPLEPQQPEAPSGASEPGSGDAKKEP.

Glycogen-targeting subunit for protein phosphatase 1 (PP1). Involved in the regulation of hepatic glycogenesis in a manner coupled to the fasting-feeding cycle and distinct from other glycogen-targeting subunits. This is Protein phosphatase 1 regulatory subunit 3G (PPP1R3G) from Homo sapiens (Human).